The primary structure comprises 548 residues: Acetolactate synthase isozyme 2 large subunit (548 aa).

Residue Glu47 participates in thiamine diphosphate binding. FAD is bound by residues Arg149, 251-272 (HGTK…VGAR), and 294-313 (DIDP…LQGD). The segment at 377 to 457 (QHQMWAAQHI…LKIVLLDNQR (81 aa)) is thiamine pyrophosphate binding. Residues Asp428 and Asn455 each coordinate Mg(2+).

This sequence belongs to the TPP enzyme family. As to quaternary structure, tetramer of two large (IlvG) and two small (IlvM) chains. FAD is required as a cofactor. It depends on Mg(2+) as a cofactor. Requires thiamine diphosphate as cofactor.

It catalyses the reaction 2 pyruvate + H(+) = (2S)-2-acetolactate + CO2. Its pathway is amino-acid biosynthesis; L-isoleucine biosynthesis; L-isoleucine from 2-oxobutanoate: step 1/4. The protein operates within amino-acid biosynthesis; L-valine biosynthesis; L-valine from pyruvate: step 1/4. With respect to regulation, inhibited by the herbicides chlorimuron ethyl, chlorsulfuron and imazapyr. Its function is as follows. Catalyzes the first step in the biosynthesis of branched-chain amino acids. This Escherichia coli (strain K12) protein is Acetolactate synthase isozyme 2 large subunit (ilvG).